The following is a 1241-amino-acid chain: ATP-dependent helicase/nuclease subunit A (1241 aa).

Residues 12–485 enclose the UvrD-like helicase ATP-binding domain; sequence SQWTDDQWKA…IDLAKNFRSR (474 aa). 33 to 40 contacts ATP; sequence AAAGSGKT. Residues 505–805 form the UvrD-like helicase C-terminal domain; the sequence is GEIDYDADAE…RIMTIHKSKG (301 aa).

The protein belongs to the helicase family. AddA subfamily. As to quaternary structure, heterodimer of AddA and AddB/RexB. Mg(2+) is required as a cofactor.

The enzyme catalyses Couples ATP hydrolysis with the unwinding of duplex DNA by translocating in the 3'-5' direction.. It carries out the reaction ATP + H2O = ADP + phosphate + H(+). In terms of biological role, the heterodimer acts as both an ATP-dependent DNA helicase and an ATP-dependent, dual-direction single-stranded exonuclease. Recognizes the chi site generating a DNA molecule suitable for the initiation of homologous recombination. The AddA nuclease domain is required for chi fragment generation; this subunit has the helicase and 3' -&gt; 5' nuclease activities. This Bacillus cereus (strain G9842) protein is ATP-dependent helicase/nuclease subunit A.